Here is a 483-residue protein sequence, read N- to C-terminus: BTB/POZ domain and ankyrin repeat-containing protein NBCL (483 aa).

The BTB domain maps to 25 to 109 (SDVTFSVEGR…LYSGQVSIVP (85 aa)). The segment at 115–129 (RPNCGERACWHTHCT) adopts a C2HC NPR-type zinc-finger fold. Zn(2+)-binding residues include C118, C123, H125, and C128. 4 ANK repeats span residues 254 to 283 (QKIR…LNLD), 284 to 313 (EALA…DVNY), 318 to 347 (SGKT…DPNV), and 351 to 385 (DGVT…KLRL). The disordered stretch occupies residues 401–437 (EGNANANSSNNNNAPCSAATPIYPPMNEDHNSSSSNA). Over residues 403-419 (NANANSSNNNNAPCSAA) the composition is skewed to low complexity.

It belongs to the plant 'ANKYRIN-BTB/POZ' family. 'NOOT-BOP-COCH-like' (NBCL) subfamily. Homodimer. Interacts with APP1 around the plasma membrane and in the nucleus; this interaction disturbs APP1-mediated regulation of the nuclear transcription factor Y subunit (NF-YA1). As to expression, mainly expressed in root nodules, to a lesser extent in shoot apical meristems (SAM) and root meristems (RM), and barely in leaves, non-nodulating roots and root apical meristems (RAM).

The protein resides in the nucleus. Its subcellular location is the cytoplasm. It is found in the cell membrane. Its pathway is protein modification; protein ubiquitination. Functionally, may act as a substrate-specific adapter of an E3 ubiquitin-protein ligase complex (CUL3-RBX1-BTB) which mediates the ubiquitination and subsequent proteasomal degradation of target proteins. Transcriptional co-regulator involved in the promotion of leaf and floral meristem fate and determinacy. Required for the abscission of senescent organs, probably by regulating the cell wall disorganization in abscission zones (AZs, e.g. pulvini at the base of leaves). Involved in the coordination of the symbiotic nodule developmental program; promotes the formation of root nodules by interacting directly with APP1 to modulate the expression of the nuclear transcription factor Y subunit (NF-YA1), a key nodulin. Necessary for the robust maintenance of nodule identity throughout the nodule developmental program. In Lotus japonicus (Lotus corniculatus var. japonicus), this protein is BTB/POZ domain and ankyrin repeat-containing protein NBCL.